Here is a 390-residue protein sequence, read N- to C-terminus: Neuromedin-B receptor (390 aa).

The segment covering 1-19 (MPSKSLSNLSVTTGANESG) has biased composition (polar residues). Residues 1 to 22 (MPSKSLSNLSVTTGANESGSVP) are disordered. The Extracellular portion of the chain corresponds to 1–41 (MPSKSLSNLSVTTGANESGSVPEGWERDFLPASDGTTTELV). N-linked (GlcNAc...) asparagine glycans are attached at residues Asn8 and Asn16. Residues 42-65 (IRCVIPSLYLLIITVGLLGNIMLV) form a helical membrane-spanning segment. Residues 66–79 (KIFITNSAMRSVPN) lie on the Cytoplasmic side of the membrane. The helical transmembrane segment at 80-99 (IFISNLAAGDLLLLLTCVPV) threads the bilayer. The Extracellular portion of the chain corresponds to 100–117 (DASRYFFDEWMFGKVGCK). Cys116 and Cys198 are joined by a disulfide. Residues 118-139 (LIPVIQLTSVGVSVFTLTALSA) form a helical membrane-spanning segment. The Cytoplasmic portion of the chain corresponds to 140-156 (DRYRAIVNPMDMQTSGA). The helical transmembrane segment at 157 to 177 (LLRTCVKAMGIWVVSVLLAVP) threads the bilayer. Residues 178–211 (EAVFSEVARISSLDNSSFTACIPYPQTDELHPKI) lie on the Extracellular side of the membrane. N-linked (GlcNAc...) asparagine glycosylation occurs at Asn192. A helical membrane pass occupies residues 212–235 (HSVLIFLVYFLIPLAIISIYYYHI). Topologically, residues 236–266 (AKTLIKSAHNLPGEYNEHTKKQMETRKRLAK) are cytoplasmic. A helical transmembrane segment spans residues 267–287 (IVLVFVGCFIFCWFPNHILYM). The Extracellular portion of the chain corresponds to 288–299 (YRSFNYNEIDPS). Residues 300–327 (LGHMIVTLVARVLSFGNSCVNPFALYLL) form a helical membrane-spanning segment. Topologically, residues 328–390 (SESFRRHFNS…GHSMKQEMAL (63 aa)) are cytoplasmic. Cys341 is lipidated: S-palmitoyl cysteine. Phosphoserine is present on Ser352.

This sequence belongs to the G-protein coupled receptor 1 family. As to expression, expressed in epididymis (at protein level).

It is found in the cell membrane. Receptor for neuromedin-B. Contributes to the maintenance of basal sigh rate through signaling in the pre-Botzinger complex, a cluster of several thousand neurons in the ventrolateral medulla responsible for inspiration during respiratory activity. Contributes to the induction of sneezing following exposure to chemical irritants or allergens which causes release of NMB by nasal sensory neurons and activation of NMBR-expressing neurons in the sneeze-evoking region of the brainstem. These in turn activate neurons of the caudal ventral respiratory group, giving rise to the sneezing response. Contributes to induction of acute itch, possibly through its activation on dorsal root ganglion neurons by the NMB peptide. Plays a role in the innate immune response to influenza A virus infection by enhancing interferon alpha expression and reducing expression of IL6. Plays a role in CSF1-induced proliferation of osteoclast precursors by contributing to the positive regulation of the expression of the CSF1 receptor CSF1R. The protein is Neuromedin-B receptor (NMBR) of Homo sapiens (Human).